A 48-amino-acid polypeptide reads, in one-letter code: Large ribosomal subunit protein bL36c (48 aa).

Belongs to the bacterial ribosomal protein bL36 family.

The protein localises to the plastid. It localises to the chloroplast. This is Large ribosomal subunit protein bL36c (rpl36) from Guillardia theta (Cryptophyte).